Consider the following 293-residue polypeptide: MFTGSIVALITPMDDNGDVDRASLKSLIDYHVASGTAAIVSVGTTGESATLNHDEHVDVVMQTLELADGRIPVIAGTGANSTSEAISLTQRFNDTGVVGCLTVTPYYNRPMQEGLYQHFKAIAESTDLPQILYNVPSRTGCDMLPPTIARLAKIKNIVAVKEATGNLSRVSQIQVLVDDEDFILLSGDDASGLDFMQLGGKGVISVTANIAAREMVELCALAAQGNFAEGRRLNQRLMPLHQHLFVEANPIPVKWAAKRLGLMANDTMRLPMTPLTDPAKRIVEDALKSAGLL.

A pyruvate-binding site is contributed by T45. Y133 (proton donor/acceptor) is an active-site residue. K161 acts as the Schiff-base intermediate with substrate in catalysis. I204 lines the pyruvate pocket.

The protein belongs to the DapA family. In terms of assembly, homotetramer; dimer of dimers.

The protein resides in the cytoplasm. It catalyses the reaction L-aspartate 4-semialdehyde + pyruvate = (2S,4S)-4-hydroxy-2,3,4,5-tetrahydrodipicolinate + H2O + H(+). It functions in the pathway amino-acid biosynthesis; L-lysine biosynthesis via DAP pathway; (S)-tetrahydrodipicolinate from L-aspartate: step 3/4. Catalyzes the condensation of (S)-aspartate-beta-semialdehyde [(S)-ASA] and pyruvate to 4-hydroxy-tetrahydrodipicolinate (HTPA). This chain is 4-hydroxy-tetrahydrodipicolinate synthase, found in Yersinia pseudotuberculosis serotype O:1b (strain IP 31758).